Reading from the N-terminus, the 265-residue chain is Glutamate racemase (265 aa).

Residues 7–8 and 39–40 contribute to the substrate site; these read DS and YG. Residue Cys70 is the Proton donor/acceptor of the active site. Residue 71–72 coordinates substrate; sequence NT. The Proton donor/acceptor role is filled by Cys177.

The protein belongs to the aspartate/glutamate racemases family.

It catalyses the reaction L-glutamate = D-glutamate. It participates in cell wall biogenesis; peptidoglycan biosynthesis. Its function is as follows. Provides the (R)-glutamate required for cell wall biosynthesis. The protein is Glutamate racemase of Prochlorococcus marinus (strain NATL1A).